The sequence spans 450 residues: Sulfide:quinone oxidoreductase, mitochondrial (450 aa).

FAD-binding positions include 53–54 (AG), Glu-75, Gln-83, and Val-118. N6-acetyllysine is present on residues Lys-134 and Lys-173. Residue Cys-201 is the Cysteine persulfide intermediate of the active site. A disulfide bridge connects residues Cys-201 and Cys-379. Residue Asp-336 participates in FAD binding. A Phosphoserine modification is found at Ser-343. Position 344–347 (344–347 (KTAA)) interacts with FAD. The Cysteine persulfide intermediate role is filled by Cys-379.

The protein belongs to the SQRD family. FAD is required as a cofactor.

It is found in the mitochondrion. The catalysed reaction is ubiquinone-10 + hydrogen sulfide + sulfite + 2 H(+) = ubiquinol-10 + thiosulfate. The enzyme catalyses a quinone + hydrogen sulfide + glutathione + H(+) = S-sulfanylglutathione + a quinol. It catalyses the reaction ubiquinone-10 + hydrogen sulfide + glutathione + H(+) = S-sulfanylglutathione + ubiquinol-10. Its function is as follows. Catalyzes the oxidation of hydrogen sulfide with the help of a quinone, such as ubiquinone-10, giving rise to thiosulfate and ultimately to sulfane (molecular sulfur) atoms. Requires an additional electron acceptor; can use sulfite, sulfide or cyanide (in vitro). It is believed the in vivo electron acceptor is glutathione. The sequence is that of Sulfide:quinone oxidoreductase, mitochondrial from Mus musculus (Mouse).